Consider the following 321-residue polypeptide: L-carnitine dehydrogenase (321 aa).

14–19 (GSGVIG) provides a ligand contact to NAD(+). Residues 317–321 (MTFSE) are important for catalytic activity.

Belongs to the 3-hydroxyacyl-CoA dehydrogenase family. L-carnitine dehydrogenase subfamily. Homodimer.

It is found in the cytoplasm. It catalyses the reaction carnitine + NAD(+) = 3-dehydrocarnitine + NADH + H(+). The protein operates within amine and polyamine metabolism; carnitine metabolism. Its activity is regulated as follows. The enzyme activity is strongly inhibited by Ag(+), Ni(+), Hg(+), and p-chloromercuribenzoate, and partially inhibited by Li(+), Ca(2+), Mn(2+), Co(2+), Cu(2+), and Zn(2+). Catalyzes the NAD(+)-dependent oxidation of L-carnitine to 3-dehydrocarnitine. Is specific for L-carnitine and NAD(+) as substrates since D-carnitine, other carnitine analogs such as choline and betaine, and NADP(+) are not substrates. Despite a high similarity to 3-hydroxyacyl-CoA dehydrogenases, cannot dehydrogenate 3-hydroxybutylate and 3-hydroxybutyl-CoA. Is probably involved in a L-carnitine degradation pathway that allows Pseudomonas sp. strain NBRC 13558 to grow on L-carnitine as the sole source of carbon and nitrogen. The chain is L-carnitine dehydrogenase from Pseudomonas sp.